A 380-amino-acid polypeptide reads, in one-letter code: Cytochrome b (380 aa).

4 consecutive transmembrane segments (helical) span residues 34-54, 78-99, 114-134, and 179-199; these read FGSL…LLAT, WLIR…YLHI, WNTG…GYVL, and FFAL…IHLT. Residues histidine 84 and histidine 98 each coordinate heme b. Residues histidine 183 and histidine 197 each coordinate heme b. Histidine 202 serves as a coordination point for a ubiquinone. Helical transmembrane passes span 227-247, 289-309, 321-341, and 348-368; these read LKDI…ALFS, LGGV…PLLH, LSQL…WVGS, and FIII…LLFP.

Belongs to the cytochrome b family. In terms of assembly, the cytochrome bc1 complex contains 11 subunits: 3 respiratory subunits (MT-CYB, CYC1 and UQCRFS1), 2 core proteins (UQCRC1 and UQCRC2) and 6 low-molecular weight proteins (UQCRH/QCR6, UQCRB/QCR7, UQCRQ/QCR8, UQCR10/QCR9, UQCR11/QCR10 and a cleavage product of UQCRFS1). This cytochrome bc1 complex then forms a dimer. Heme b is required as a cofactor.

It is found in the mitochondrion inner membrane. Functionally, component of the ubiquinol-cytochrome c reductase complex (complex III or cytochrome b-c1 complex) that is part of the mitochondrial respiratory chain. The b-c1 complex mediates electron transfer from ubiquinol to cytochrome c. Contributes to the generation of a proton gradient across the mitochondrial membrane that is then used for ATP synthesis. In Cepphus grylle (Black guillemot), this protein is Cytochrome b (MT-CYB).